A 39-amino-acid polypeptide reads, in one-letter code: Cytochrome b6-f complex subunit 5 (39 aa).

The helical transmembrane segment at 5–25 (LLSGIVLGLVPVTILGLFVTA) threads the bilayer.

It belongs to the PetG family. The 4 large subunits of the cytochrome b6-f complex are cytochrome b6, subunit IV (17 kDa polypeptide, PetD), cytochrome f and the Rieske protein, while the 4 small subunits are PetG, PetL, PetM and PetN. The complex functions as a dimer.

It localises to the plastid. Its subcellular location is the chloroplast thylakoid membrane. Functionally, component of the cytochrome b6-f complex, which mediates electron transfer between photosystem II (PSII) and photosystem I (PSI), cyclic electron flow around PSI, and state transitions. PetG is required for either the stability or assembly of the cytochrome b6-f complex. The sequence is that of Cytochrome b6-f complex subunit 5 from Pleurastrum terricola (Filamentous green alga).